A 249-amino-acid chain; its full sequence is Methylthioribulose-1-phosphate dehydratase (249 aa).

The interval 1–25 is disordered; the sequence is MVDIKPEQTQEGNNNDHLVQSDDPE. Residues 9–18 are compositionally biased toward polar residues; sequence TQEGNNNDHL. Substrate is bound at residue C105. Positions 122 and 124 each coordinate Zn(2+). The active-site Proton donor/acceptor is the E151. A Zn(2+)-binding site is contributed by H207.

It belongs to the aldolase class II family. MtnB subfamily. The cofactor is Zn(2+).

It localises to the cytoplasm. The enzyme catalyses 5-(methylsulfanyl)-D-ribulose 1-phosphate = 5-methylsulfanyl-2,3-dioxopentyl phosphate + H2O. It participates in amino-acid biosynthesis; L-methionine biosynthesis via salvage pathway; L-methionine from S-methyl-5-thio-alpha-D-ribose 1-phosphate: step 2/6. In terms of biological role, catalyzes the dehydration of methylthioribulose-1-phosphate (MTRu-1-P) into 2,3-diketo-5-methylthiopentyl-1-phosphate (DK-MTP-1-P). The protein is Methylthioribulose-1-phosphate dehydratase of Arthroderma otae (strain ATCC MYA-4605 / CBS 113480) (Microsporum canis).